Here is a 422-residue protein sequence, read N- to C-terminus: Probable glucuronosyltransferase Os01g0926400 (422 aa).

Over 1 to 8 the chain is Cytoplasmic; it reads MGTRPCAG. A helical; Signal-anchor for type II membrane protein membrane pass occupies residues 9-29; that stretch reads VASAVAAAVAVLLLAVSCFAA. The Lumenal segment spans residues 30-422; the sequence is AATTTQKHGR…QGLENDLKPW (393 aa). The N-linked (GlcNAc...) asparagine glycan is linked to N149.

The protein belongs to the glycosyltransferase 47 family.

It localises to the golgi apparatus membrane. Its function is as follows. Involved in the synthesis of glucuronoxylan hemicellulose in secondary cell walls. The polypeptide is Probable glucuronosyltransferase Os01g0926400 (Oryza sativa subsp. japonica (Rice)).